The sequence spans 779 residues: Translation initiation factor IF-2 (779 aa).

Residues 44–193 form a disordered region; it reads RQLDNAVDGT…TPPKPKELPE (150 aa). Residues 53–65 are compositionally biased toward basic and acidic residues; it reads TNKKAEAPKKETT. The segment covering 66 to 81 has biased composition (polar residues); that stretch reads SNENGNSKGPNKPNMT. Composition is skewed to low complexity over residues 82–93 and 117–167; these read NSNEKSNKPNKP and ANTS…NNKG. Residues 280–449 form the tr-type G domain; sequence ERPPVVTIMG…LLVSEVEELK (170 aa). The G1 stretch occupies residues 289 to 296; it reads GHVDHGKT. 289–296 is a binding site for GTP; it reads GHVDHGKT. Positions 314 to 318 are G2; that stretch reads GITQH. A G3 region spans residues 335-338; sequence DTPG. Residues 335–339 and 389–392 contribute to the GTP site; these read DTPGH and NKID. Positions 389–392 are G4; that stretch reads NKID. The tract at residues 425–427 is G5; sequence SAK.

It belongs to the TRAFAC class translation factor GTPase superfamily. Classic translation factor GTPase family. IF-2 subfamily.

The protein localises to the cytoplasm. One of the essential components for the initiation of protein synthesis. Protects formylmethionyl-tRNA from spontaneous hydrolysis and promotes its binding to the 30S ribosomal subunits. Also involved in the hydrolysis of GTP during the formation of the 70S ribosomal complex. This is Translation initiation factor IF-2 from Listeria monocytogenes serovar 1/2a (strain ATCC BAA-679 / EGD-e).